The sequence spans 396 residues: Cathepsin D (396 aa).

Residues 1–18 (MKMLLLCVFSALALTNDA) form the signal peptide. A propeptide spans 19-61 (LVRIPLKKFRSIRRQLTDSGKRAEELLADHHSLKYNLSFPASN) (activation peptide). One can recognise a Peptidase A1 domain in the interval 76–393 (YYGEIGLGTP…DRDANRVGFA (318 aa)). D94 is a catalytic residue. A disulfide bond links C107 and C114. N-linked (GlcNAc...) asparagine glycosylation is found at N131 and N249. An intrachain disulfide couples C272 to C276. Residue D281 is part of the active site. The cysteines at positions 315 and 352 are disulfide-linked.

Belongs to the peptidase A1 family. As to quaternary structure, monomer.

It is found in the lysosome. It carries out the reaction Specificity similar to, but narrower than, that of pepsin A. Does not cleave the 4-Gln-|-His-5 bond in B chain of insulin.. Inhibited by pepstatin. Acid protease active in intracellular protein breakdown. This is Cathepsin D (ctsd) from Chionodraco hamatus (Antarctic teleost icefish).